Reading from the N-terminus, the 553-residue chain is Chaperonin GroEL 1 (553 aa).

ATP-binding positions include 29–32 (TIGP), 86–90 (DGTTT), G413, 476–478 (NAL), and D492. The tract at residues 521–542 (KPEPPAAPAPGGDPMGGMGGMG) is disordered. Positions 533-542 (DPMGGMGGMG) are enriched in gly residues.

Belongs to the chaperonin (HSP60) family. Forms a cylinder of 14 subunits composed of two heptameric rings stacked back-to-back. Interacts with the co-chaperonin GroES.

It is found in the cytoplasm. It catalyses the reaction ATP + H2O + a folded polypeptide = ADP + phosphate + an unfolded polypeptide.. Together with its co-chaperonin GroES, plays an essential role in assisting protein folding. The GroEL-GroES system forms a nano-cage that allows encapsulation of the non-native substrate proteins and provides a physical environment optimized to promote and accelerate protein folding. The protein is Chaperonin GroEL 1 of Synechococcus sp. (strain WH7803).